The primary structure comprises 1141 residues: Serine-aspartate repeat-containing protein E (1141 aa).

Residues 1–52 form the signal peptide; sequence MINRDNKKAITKKGMISNRLNKFSIRKYTVGTASILVGTTLIFGLGNQEAKA. Residues 23–34 carry the YSIRK-G/S signaling motif motif; that stretch reads FSIRKYTVGTAS. Residues 53 to 601 form a ligand binding A region region; the sequence is AENTSTENAK…GDGTVKPEEK (549 aa). Positions 54-248 are disordered; the sequence is ENTSTENAKQ…RSTKPVATAP (195 aa). Over residues 61 to 75 the composition is skewed to basic and acidic residues; it reads AKQDDATTSDNKEVV. The segment covering 77–90 has biased composition (low complexity); that stretch reads ETENNSTTENDSTN. The span at 92 to 108 shows a compositional bias: basic and acidic residues; it reads IKKETNTDSQPEAKEES. Positions 109 to 126 are enriched in low complexity; it reads TTSSTQQQQNNVTATTET. Residues 130–145 show a composition bias toward basic and acidic residues; sequence NIEKENVKPSTDKTAT. Polar residues predominate over residues 159 to 207; it reads NYTNNDVTTKPSTSEIQTKPTTPQESTNIENSQPQPTPSKVDNQVTDAT. The span at 216-241 shows a compositional bias: basic and acidic residues; the sequence is SKEELKNNPEKLKELVRNDNNTDRST. 3 consecutive CNA-B domains span residues 602 to 714, 715 to 824, and 825 to 935; these read LYKI…YKEP, KYNL…YKTP, and KYSL…EEDT. A disordered region spans residues 899 to 1117; the sequence is VTNTTEDDKD…GSENNGSNNA (219 aa). Acidic residues-rich tracts occupy residues 903-913 and 930-1080; these read TEDDKDADGGE and YFEE…DSDS. The LPXTG sorting signal signature appears at 1104 to 1108; sequence LPETG. Position 1107 is a pentaglycyl murein peptidoglycan amidated threonine (Thr1107). Positions 1108-1141 are cleaved as a propeptide — removed by sortase; sequence GSENNGSNNATLFGGLFAALGSLLLFGRRKKQNK.

It belongs to the serine-aspartate repeat-containing protein (SDr) family. In terms of assembly, interacts with host complement factor H/CFAH (via C-terminus). Interacts with host complement regulator C4BPA.

Its subcellular location is the secreted. The protein resides in the cell wall. Cell surface-associated calcium-binding protein which plays an important role in adhesion and pathogenesis. Contributes to the resistance to killing by innate immune components in blood and thus attenuates bacterial clearance by interacting with host complement factor H/CFAH and modulating its activity. Also inhibits bacterial opsonization and killing by interacting with host complement regulator C4BPA and thus inhibiting classical complement pathway activation. The polypeptide is Serine-aspartate repeat-containing protein E (sdrE) (Staphylococcus aureus (strain N315)).